The chain runs to 297 residues: Protein PecM (297 aa).

Transmembrane regions (helical) follow at residues 6–26 (FAFY…QFLP), 38–58 (ALPA…GWLW), 60–80 (LFVL…FAAY), 86–106 (VVAL…FLLL), 116–136 (VAAV…KAPL), 138–158 (PAGL…LVLT), 167–187 (MTML…ILPV), 203–223 (LAGY…MWFS), 231–251 (VIMS…GFLF), and 261–281 (LVGV…SLFS). EamA domains lie at 12 to 130 (CVWG…LLIS) and 149 to 276 (MSMA…IVQD).

The protein belongs to the EamA transporter family.

The protein localises to the cell membrane. Its function is as follows. Involved in pectinase, cellulase, and blue pigment regulation. In Dickeya dadantii (strain 3937) (Erwinia chrysanthemi (strain 3937)), this protein is Protein PecM (pecM).